Consider the following 51-residue polypeptide: SPbeta prophage-derived uncharacterized protein YorQ (51 aa).

The protein is SPbeta prophage-derived uncharacterized protein YorQ (yorQ) of Bacillus subtilis (strain 168).